A 914-amino-acid chain; its full sequence is Probable dipeptidyl-aminopeptidase B (914 aa).

Basic and acidic residues predominate over residues 1 to 10 (MATFSDHETS). A disordered region spans residues 1–63 (MATFSDHETS…TGMDNGDRYR (63 aa)). The Cytoplasmic segment spans residues 1-91 (MATFSDHETS…KAATGGRARR (91 aa)). The segment covering 20–35 (STSSASQTSSDSGLSS) has biased composition (low complexity). The segment covering 45–56 (QPFSAPNGTTGM) has biased composition (polar residues). The chain crosses the membrane as a helical; Signal-anchor for type II membrane protein span at residues 92–112 (IFWLLVLLCFGGWLLAFVLFL). Over 113–914 (TGGRANYQSA…RFKRSLPVLV (802 aa)) the chain is Vacuolar. N348, N565, and N639 each carry an N-linked (GlcNAc...) asparagine glycan. S753 acts as the Charge relay system in catalysis. An N-linked (GlcNAc...) asparagine glycan is attached at N807. Catalysis depends on charge relay system residues D830 and H863.

Belongs to the peptidase S9B family.

Its subcellular location is the vacuole membrane. It carries out the reaction Release of an N-terminal dipeptide, Xaa-Yaa-|-Zaa-, from a polypeptide, preferentially when Yaa is Pro, provided Zaa is neither Pro nor hydroxyproline.. In terms of biological role, type IV dipeptidyl-peptidase which removes N-terminal dipeptides sequentially from polypeptides having unsubstituted N-termini provided that the penultimate residue is proline. This chain is Probable dipeptidyl-aminopeptidase B (dapB), found in Aspergillus clavatus (strain ATCC 1007 / CBS 513.65 / DSM 816 / NCTC 3887 / NRRL 1 / QM 1276 / 107).